The chain runs to 207 residues: Guanylate kinase (207 aa).

The 181-residue stretch at 4 to 184 (GTLYIVSAPS…ALMDFKAIIR (181 aa)) folds into the Guanylate kinase-like domain. 11-18 (APSGAGKS) is an ATP binding site.

The protein belongs to the guanylate kinase family.

It is found in the cytoplasm. It carries out the reaction GMP + ATP = GDP + ADP. In terms of biological role, essential for recycling GMP and indirectly, cGMP. The sequence is that of Guanylate kinase from Vibrio vulnificus (strain CMCP6).